The sequence spans 159 residues: UPF0336 protein MAP_4107 (159 aa).

It belongs to the UPF0336 family.

This chain is UPF0336 protein MAP_4107, found in Mycolicibacterium paratuberculosis (strain ATCC BAA-968 / K-10) (Mycobacterium paratuberculosis).